The following is a 954-amino-acid chain: DNA repair and telomere maintenance protein NBS1 (954 aa).

Positions 22 to 85 (YLFGRTVAEA…KGTLVNGVQI (64 aa)) constitute an FHA domain. BRCT domains are found at residues 107-186 (TLKI…NAIV) and 244-349 (GYTF…LEAI). The span at 368 to 377 (VSVSASVEPQ) shows a compositional bias: polar residues. Disordered regions lie at residues 368-431 (VSVS…FKGF), 444-506 (QAQS…PLPE), 528-580 (IEAG…KQED), 630-654 (VRQPEPHGPNRTREQDIADGRWDPR), and 692-954 (GIGD…GRRR). Basic and acidic residues predominate over residues 378 to 393 (SSEKVRPAVEDRKEVE). The segment covering 416–428 (PHRRERRTGRSRF) has biased composition (basic residues). Positions 458 to 471 (PSASQDSLFVSQRE) are enriched in polar residues. Positions 541-554 (PEPEREDEDVEMVE) are enriched in acidic residues. Composition is skewed to basic and acidic residues over residues 640 to 654 (RTREQDIADGRWDPR) and 704 to 715 (GRVPRRPKETQT). The segment covering 726–737 (DGSGFAAAAASG) has biased composition (low complexity). A compositionally biased stretch (basic and acidic residues) spans 738–751 (KGKEKDKENEKEVG). Composition is skewed to low complexity over residues 801 to 815 (EVVSSFPSVIPASEP) and 826 to 842 (RANALRSSAHSSQSQTQ). Acidic residues predominate over residues 936–945 (GSEEESEDDE).

The protein belongs to the Nibrin family. In terms of assembly, component of the MRN complex composed of two heterodimers RAD50 and MRE11 associated with a single NBS1.

It localises to the nucleus. Its subcellular location is the chromosome. Functionally, component of the MRN complex, which plays a central role in double-strand break (DSB) repair, DNA recombination, maintenance of telomere integrity and meiosis. The MRN complex is involved in the repair of DNA double-strand breaks (DSBs) via homologous recombination (HR), an error-free mechanism which primarily occurs during S and G2 phases. The complex (1) mediates the end resection of damaged DNA, which generates proper single-stranded DNA, a key initial steps in HR, and is (2) required for the recruitment of other repair factors and efficient activation of ATM and ATR upon DNA damage. The MRN complex possesses single-strand endonuclease activity and double-strand-specific 3'-5' exonuclease activity, which are provided by MRE11, to initiate end resection, which is required for single-strand invasion and recombination. Within the MRN complex, NBS1 acts as a protein-protein adapter, which specifically recognizes and binds phosphorylated proteins, promoting their recruitment to DNA damage sites. Recruits MRE11 and RAD50 components of the MRN complex to DSBs in response to DNA damage. In Chaetomium thermophilum (strain DSM 1495 / CBS 144.50 / IMI 039719) (Thermochaetoides thermophila), this protein is DNA repair and telomere maintenance protein NBS1.